The following is a 433-amino-acid chain: Enolase (433 aa).

(2R)-2-phosphoglycerate is bound at residue Q166. The active-site Proton donor is E208. Mg(2+)-binding residues include D245, E290, and D317. (2R)-2-phosphoglycerate-binding residues include K342, R371, S372, and K393. K342 functions as the Proton acceptor in the catalytic mechanism.

This sequence belongs to the enolase family. Mg(2+) is required as a cofactor.

It localises to the cytoplasm. The protein localises to the secreted. Its subcellular location is the cell surface. It catalyses the reaction (2R)-2-phosphoglycerate = phosphoenolpyruvate + H2O. It participates in carbohydrate degradation; glycolysis; pyruvate from D-glyceraldehyde 3-phosphate: step 4/5. Its function is as follows. Catalyzes the reversible conversion of 2-phosphoglycerate (2-PG) into phosphoenolpyruvate (PEP). It is essential for the degradation of carbohydrates via glycolysis. This is Enolase from Clostridium novyi (strain NT).